The chain runs to 43 residues: Protein PsbN (43 aa).

The helical transmembrane segment at 5–27 (TLVAISISGSLVSFTGYALYTAF) threads the bilayer.

Belongs to the PsbN family.

The protein localises to the plastid. Its subcellular location is the chloroplast thylakoid membrane. In terms of biological role, may play a role in photosystem I and II biogenesis. This chain is Protein PsbN, found in Drimys granadensis.